Here is a 485-residue protein sequence, read N- to C-terminus: Glutamate--tRNA ligase (485 aa).

The 'HIGH' region motif lies at 11 to 21; sequence PSPTGHLHIGN. The short motif at 252-256 is the 'KMSKS' region element; the sequence is KLSKR. Lys-255 is an ATP binding site.

This sequence belongs to the class-I aminoacyl-tRNA synthetase family. Glutamate--tRNA ligase type 1 subfamily. Monomer.

The protein resides in the cytoplasm. It catalyses the reaction tRNA(Glu) + L-glutamate + ATP = L-glutamyl-tRNA(Glu) + AMP + diphosphate. Catalyzes the attachment of glutamate to tRNA(Glu) in a two-step reaction: glutamate is first activated by ATP to form Glu-AMP and then transferred to the acceptor end of tRNA(Glu). In Bacillus cytotoxicus (strain DSM 22905 / CIP 110041 / 391-98 / NVH 391-98), this protein is Glutamate--tRNA ligase.